Here is a 155-residue protein sequence, read N- to C-terminus: NADPH-dependent 7-cyano-7-deazaguanine reductase (155 aa).

The Thioimide intermediate role is filled by Cys53. The active-site Proton donor is Asp60. Substrate is bound by residues 75–77 and 94–95; these read VES and HE.

Belongs to the GTP cyclohydrolase I family. QueF type 1 subfamily.

The protein localises to the cytoplasm. It catalyses the reaction 7-aminomethyl-7-carbaguanine + 2 NADP(+) = 7-cyano-7-deazaguanine + 2 NADPH + 3 H(+). It participates in tRNA modification; tRNA-queuosine biosynthesis. Catalyzes the NADPH-dependent reduction of 7-cyano-7-deazaguanine (preQ0) to 7-aminomethyl-7-deazaguanine (preQ1). This Hyphomonas neptunium (strain ATCC 15444) protein is NADPH-dependent 7-cyano-7-deazaguanine reductase.